Here is a 203-residue protein sequence, read N- to C-terminus: Ponticulin-like protein H (203 aa).

An N-terminal signal peptide occupies residues 1-20 (MKLLNSLVLLAALCAITANG). Asn58 carries N-linked (GlcNAc...) asparagine glycosylation. Low complexity predominate over residues 127–168 (SDSTNPTSTPSTTPSATPTVTPSTTPTVTPTVTPSTTPTVAP). The segment at 127–183 (SDSTNPTSTPSTTPSATPTVTPSTTPTVTPTVTPSTTPTVAPTVPPTTPPSTTTGSG) is disordered. The GPI-like-anchor amidated serine moiety is linked to residue Ser182. The propeptide at 183-203 (GSTVVASFGLIVSILLASLAL) is removed in mature form.

The protein belongs to the ponticulin family. Post-translationally, the GPI-like-anchor contains a phosphoceramide group, rather than a phosphatidyl group.

Its subcellular location is the cell membrane. In terms of biological role, binds F-actin and nucleates actin assembly. This Dictyostelium discoideum (Social amoeba) protein is Ponticulin-like protein H (ponH).